Consider the following 473-residue polypeptide: FAD-dependent oxidoreductase dpasF (473 aa).

The N-terminal stretch at 1 to 21 (MNRLLASALLVGSAVVAPVSA) is a signal peptide. N26, N54, N92, N133, N185, N276, and N401 each carry an N-linked (GlcNAc...) asparagine glycan.

This sequence belongs to the beta-cyclopiazonate dehydrogenase family. Requires FAD as cofactor.

It participates in secondary metabolite biosynthesis; terpenoid biosynthesis. Functionally, FAD-dependent oxidoreductase; part of the gene cluster that mediates the biosynthesis of the diterpenoid pyrones subglutinols A and B. The first step of the pathway is the synthesis of the alpha-pyrone moiety by the polyketide synthase dpasA via condensation of one acetyl-CoA starter unit with 3 malonyl-CoA units and 2 methylations. The alpha-pyrone is then combined with geranylgeranyl pyrophosphate (GGPP) formed by the GGPP synthase dpasD through the action of the prenyltransferase dpasC to yield a linear alpha-pyrone diterpenoid. Subsequent steps in the diterpenoid pyrone biosynthetic pathway involve the decalin core formation, which is initiated by the epoxidation of the C10-C11 olefin by the FAD-dependent oxidoreductase dpasE, and is followed by a cyclization cascade catalyzed by the terpene cyclase dpasB. The FAD-linked oxidoreductase dpasF is then involved in tetrahydrofuran (THF) ring formation at the C5 unit to complete the formation of subglutinols A and B. DpasF possesses also an additional catalytic ability of multi-step oxidations to generate a new DDP analog with an enone system at the C5 named FDDP A. In Apiospora sacchari (Arthrinium sacchari), this protein is FAD-dependent oxidoreductase dpasF.